Consider the following 129-residue polypeptide: Fluoride-specific ion channel FluC (129 aa).

A run of 4 helical transmembrane segments spans residues 5-25, 32-52, 60-80, and 99-119; these read LTIA…SGWV, AFPF…GLIM, LIPA…LTTF, and AMVN…LGVI. Na(+) is bound by residues Gly-75 and Thr-78.

The protein belongs to the fluoride channel Fluc/FEX (TC 1.A.43) family.

It is found in the cell inner membrane. It carries out the reaction fluoride(in) = fluoride(out). With respect to regulation, na(+) is not transported, but it plays an essential structural role and its presence is essential for fluoride channel function. Its function is as follows. Fluoride-specific ion channel. Important for reducing fluoride concentration in the cell, thus reducing its toxicity. This chain is Fluoride-specific ion channel FluC, found in Pelobacter propionicus (strain DSM 2379 / NBRC 103807 / OttBd1).